A 340-amino-acid chain; its full sequence is Insulin gene enhancer protein ISL-2B (340 aa).

LIM zinc-binding domains are found at residues 9-62 and 71-125; these read CVGC…CKRD and CAKC…RADH. The segment at residues 172–231 is a DNA-binding region (homeobox); that stretch reads TTRVRTVLNEKQLHTLRTCYNANPRPDALMKEQLVEMTGLSPRVIRVWFQNKRCKDKKRT. Over residues 307–317 the composition is skewed to low complexity; it reads ESGSMGNSSGS. The disordered stretch occupies residues 307 to 340; that stretch reads ESGSMGNSSGSDVTSLSSQLPDTPNSMVPSPMDT. Positions 318-340 are enriched in polar residues; that stretch reads DVTSLSSQLPDTPNSMVPSPMDT.

It localises to the nucleus. Functionally, binds to one of the cis-acting domain of the insulin gene enhancer. May be involved in subtype specialization of primary motoneurons. The chain is Insulin gene enhancer protein ISL-2B (isl2b) from Oncorhynchus tshawytscha (Chinook salmon).